We begin with the raw amino-acid sequence, 103 residues long: Turripeptide OL55-like (103 aa).

Post-translationally, contains 8 disulfide bonds. As to expression, expressed by the venom duct.

It localises to the secreted. In terms of biological role, acts as a neurotoxin by inhibiting an ion channel. This chain is Turripeptide OL55-like, found in Lophiotoma albina (Sea snail).